The primary structure comprises 111 residues: MVKQEEKSIDTTVNLHKQCHKISFKKKAPRAIREIVAIAKKTMGTDDVRIDTELNKFIWSNGIRNIPRRVRVRLCKRKNEEEGAQSQFYTLVQHLQVDSYHGLLTEKTKAE.

It belongs to the eukaryotic ribosomal protein eL31 family.

The chain is Large ribosomal subunit protein eL31 (RPL31) from Tetrahymena thermophila (strain SB210).